The primary structure comprises 428 residues: 3-phosphoshikimate 1-carboxyvinyltransferase (428 aa).

3-phosphoshikimate contacts are provided by lysine 21, serine 22, and arginine 26. A phosphoenolpyruvate-binding site is contributed by lysine 21. 2 residues coordinate phosphoenolpyruvate: glycine 91 and arginine 119. 3-phosphoshikimate is bound by residues serine 164, glutamine 166, aspartate 313, and lysine 340. Residue glutamine 166 coordinates phosphoenolpyruvate. The active-site Proton acceptor is the aspartate 313. Residues arginine 344 and arginine 386 each contribute to the phosphoenolpyruvate site.

The protein belongs to the EPSP synthase family. As to quaternary structure, monomer.

It is found in the cytoplasm. It catalyses the reaction 3-phosphoshikimate + phosphoenolpyruvate = 5-O-(1-carboxyvinyl)-3-phosphoshikimate + phosphate. The protein operates within metabolic intermediate biosynthesis; chorismate biosynthesis; chorismate from D-erythrose 4-phosphate and phosphoenolpyruvate: step 6/7. Functionally, catalyzes the transfer of the enolpyruvyl moiety of phosphoenolpyruvate (PEP) to the 5-hydroxyl of shikimate-3-phosphate (S3P) to produce enolpyruvyl shikimate-3-phosphate and inorganic phosphate. The polypeptide is 3-phosphoshikimate 1-carboxyvinyltransferase (Campylobacter jejuni (strain RM1221)).